The following is a 305-amino-acid chain: tRNA dimethylallyltransferase (305 aa).

9 to 16 (GPTASGKT) is a binding site for ATP. A substrate-binding site is contributed by 11–16 (TASGKT). Interaction with substrate tRNA stretches follow at residues 34-37 (DSAL), 158-162 (QRLSR), and 239-244 (RCVGYR).

The protein belongs to the IPP transferase family. In terms of assembly, monomer. The cofactor is Mg(2+).

It catalyses the reaction adenosine(37) in tRNA + dimethylallyl diphosphate = N(6)-dimethylallyladenosine(37) in tRNA + diphosphate. In terms of biological role, catalyzes the transfer of a dimethylallyl group onto the adenine at position 37 in tRNAs that read codons beginning with uridine, leading to the formation of N6-(dimethylallyl)adenosine (i(6)A). In Aeromonas hydrophila subsp. hydrophila (strain ATCC 7966 / DSM 30187 / BCRC 13018 / CCUG 14551 / JCM 1027 / KCTC 2358 / NCIMB 9240 / NCTC 8049), this protein is tRNA dimethylallyltransferase.